The sequence spans 341 residues: 4-(gamma-L-glutamylamino)butanoyl-[BtrI acyl-carrier protein] monooxygenase BtrO (341 aa).

The protein belongs to the bacterial luciferase oxidoreductase family.

The catalysed reaction is 4-(gamma-L-glutamylamino)butanoyl-[BtrI ACP] + FMNH2 + O2 = 4-(gamma-L-glutamylamino)-(2S)-2-hydroxybutanoyl-[BtrI ACP] + FMN + H2O + H(+). Its pathway is antibiotic biosynthesis; butirosin biosynthesis. Its function is as follows. Monooxygenase component of a two-component system involved in the biosynthesis of the side chain of the aminoglycoside antibiotics in the biosynthetic pathway of butirosin. Together with BtrV, mediates hydroxylation of gamma-L-Glu-GABA-S-BtrI. Not able to hydroxylate free substrates, activation by the acyl-carrier protein is mandatory. Octanoyl-S-[BtrI acyl-carrier protein] is also accepted as substrate. This chain is 4-(gamma-L-glutamylamino)butanoyl-[BtrI acyl-carrier protein] monooxygenase BtrO (btrO), found in Niallia circulans (Bacillus circulans).